A 335-amino-acid polypeptide reads, in one-letter code: Anthranilate phosphoribosyltransferase (335 aa).

5-phospho-alpha-D-ribose 1-diphosphate-binding positions include G79, 82 to 83 (GD), T87, 89 to 92 (NIST), 107 to 115 (KHGSRSVSS), and S119. G79 is a binding site for anthranilate. S91 contacts Mg(2+). R165 lines the anthranilate pocket. Mg(2+) contacts are provided by D223 and E224.

Belongs to the anthranilate phosphoribosyltransferase family. Homodimer. Mg(2+) is required as a cofactor.

It carries out the reaction N-(5-phospho-beta-D-ribosyl)anthranilate + diphosphate = 5-phospho-alpha-D-ribose 1-diphosphate + anthranilate. Its pathway is amino-acid biosynthesis; L-tryptophan biosynthesis; L-tryptophan from chorismate: step 2/5. Catalyzes the transfer of the phosphoribosyl group of 5-phosphorylribose-1-pyrophosphate (PRPP) to anthranilate to yield N-(5'-phosphoribosyl)-anthranilate (PRA). In Helicobacter pylori (strain G27), this protein is Anthranilate phosphoribosyltransferase.